A 400-amino-acid polypeptide reads, in one-letter code: Enoyl-[acyl-carrier-protein] reductase [NADH] (400 aa).

NAD(+)-binding positions include 48 to 53 (GASTGY), 74 to 75 (FE), 111 to 112 (DA), and 139 to 140 (LA). Residue Y225 participates in substrate binding. Residue Y235 is the Proton donor of the active site. Residues K244 and 273–275 (VVT) contribute to the NAD(+) site.

This sequence belongs to the TER reductase family. In terms of assembly, monomer.

It carries out the reaction a 2,3-saturated acyl-[ACP] + NAD(+) = a (2E)-enoyl-[ACP] + NADH + H(+). Its pathway is lipid metabolism; fatty acid biosynthesis. Its function is as follows. Involved in the final reduction of the elongation cycle of fatty acid synthesis (FAS II). Catalyzes the reduction of a carbon-carbon double bond in an enoyl moiety that is covalently linked to an acyl carrier protein (ACP). The chain is Enoyl-[acyl-carrier-protein] reductase [NADH] from Burkholderia ambifaria (strain MC40-6).